The sequence spans 326 residues: Malate dehydrogenase (326 aa).

11–17 (GAAGQIG) contributes to the NAD(+) binding site. Substrate-binding residues include R92 and R98. NAD(+) is bound by residues N105, Q112, and 129–131 (VGN). 2 residues coordinate substrate: N131 and R162. The active-site Proton acceptor is the H187.

Belongs to the LDH/MDH superfamily. MDH type 2 family.

The catalysed reaction is (S)-malate + NAD(+) = oxaloacetate + NADH + H(+). Functionally, catalyzes the reversible oxidation of malate to oxaloacetate. The sequence is that of Malate dehydrogenase from Chromobacterium violaceum (strain ATCC 12472 / DSM 30191 / JCM 1249 / CCUG 213 / NBRC 12614 / NCIMB 9131 / NCTC 9757 / MK).